The following is a 481-amino-acid chain: Phosphoglucosamine mutase (481 aa).

Serine 128 serves as the catalytic Phosphoserine intermediate. Positions 128, 269, 271, and 273 each coordinate Mg(2+). Serine 128 carries the post-translational modification Phosphoserine.

This sequence belongs to the phosphohexose mutase family. The cofactor is Mg(2+). Activated by phosphorylation.

The catalysed reaction is alpha-D-glucosamine 1-phosphate = D-glucosamine 6-phosphate. In terms of biological role, catalyzes the conversion of glucosamine-6-phosphate to glucosamine-1-phosphate. This Synechocystis sp. (strain ATCC 27184 / PCC 6803 / Kazusa) protein is Phosphoglucosamine mutase.